Here is a 294-residue protein sequence, read N- to C-terminus: tRNA dimethylallyltransferase (294 aa).

9–16 contacts ATP; that stretch reads GATATGKS. 11-16 contacts substrate; sequence TATGKS. The interaction with substrate tRNA stretch occupies residues 34-37; that stretch reads DSRQ.

The protein belongs to the IPP transferase family. Monomer. It depends on Mg(2+) as a cofactor.

The catalysed reaction is adenosine(37) in tRNA + dimethylallyl diphosphate = N(6)-dimethylallyladenosine(37) in tRNA + diphosphate. Functionally, catalyzes the transfer of a dimethylallyl group onto the adenine at position 37 in tRNAs that read codons beginning with uridine, leading to the formation of N6-(dimethylallyl)adenosine (i(6)A). This Trichormus variabilis (strain ATCC 29413 / PCC 7937) (Anabaena variabilis) protein is tRNA dimethylallyltransferase.